Consider the following 339-residue polypeptide: Probable cytosolic iron-sulfur protein assembly protein CIAO1 (339 aa).

WD repeat units lie at residues 14–53 (HPDS…WICK), 59–98 (GHQR…FECV), 103–142 (GHEN…EYEC), 148–187 (SHTQ…WVCC), 192–231 (GHES…NEQG), 250–289 (FHSR…DPQQ), and 301–339 (AHSQ…PEGL). The short motif at 176–178 (LYR) is the LYR motif; required for interaction with HSC20 element.

It belongs to the WD repeat CIA1 family. In terms of assembly, component of the CIA complex. Interacts with CIAO2A and forms a complex with CIAO2B and MMS19; the interactions with CIAO2A and CIAO2B are mutually exclusive. Interacts with CHD1L, ERCC2, IREB2 and POLD1. Component of the MMXD complex, which includes CIAO1, ERCC2, CIAO2B, MMS19 and SLC25A5. Interacts with WT1. Interacts with CIAO3. Interacts (via LYR motif) with HSC20.

The protein localises to the cytoplasm. Key component of the cytosolic iron-sulfur protein assembly (CIA) complex, a multiprotein complex that mediates the incorporation of iron-sulfur cluster into extramitochondrial Fe/S proteins. As a CIA complex component, interacts specifically with CIAO2A or CIAO2B and MMS19 to assist different branches of iron-sulfur protein assembly, depending of its interactors. The complex CIAO1:CIAO2B:MMS19 binds to and facilitates the assembly of most cytosolic-nuclear Fe/S proteins. CIAO1:CIAO2A specifically matures ACO1 and stabilizes IREB2. Seems to specifically modulate the transactivation activity of WT1. As part of the mitotic spindle-associated MMXD complex it may play a role in chromosome segregation. This Homo sapiens (Human) protein is Probable cytosolic iron-sulfur protein assembly protein CIAO1.